The sequence spans 257 residues: MDVLLTNDDGIDAVGIRALYDALAEVADVTAVAPADDQSAVGRQLSRTVELHDHELGYAVEGTPADCVIAGLGALDLDPDIVVAGCNEGANLGEYVLGRSGTVSAAVEAAFFGVPAIAASVYFPAGDVTIEEFDPDKTDFAEASRAVRYLVDNAIGAGVFDAADYLNVNAPLPPETGHAPMEITEPSHVYEMDGERDGETVRIQDHIWERMAEGTIPDPPGTDRRAVVEGRVSVSPLTAPHPTTGHEGLAGLAEKYQ.

Residues aspartate 8, aspartate 9, serine 39, and asparagine 87 each coordinate a divalent metal cation. The tract at residues valine 234–glutamine 257 is disordered.

The protein belongs to the SurE nucleotidase family. It depends on a divalent metal cation as a cofactor.

It is found in the cytoplasm. It carries out the reaction a ribonucleoside 5'-phosphate + H2O = a ribonucleoside + phosphate. In terms of biological role, nucleotidase that shows phosphatase activity on nucleoside 5'-monophosphates. This chain is 5'-nucleotidase SurE, found in Natronomonas pharaonis (strain ATCC 35678 / DSM 2160 / CIP 103997 / JCM 8858 / NBRC 14720 / NCIMB 2260 / Gabara) (Halobacterium pharaonis).